A 138-amino-acid chain; its full sequence is Basic phospholipase A2 B (138 aa).

The signal sequence occupies residues 1-16 (MRALWIVAVLLLGVEG). Cystine bridges form between Cys-42–Cys-131, Cys-44–Cys-60, Cys-59–Cys-111, Cys-65–Cys-138, Cys-66–Cys-104, Cys-73–Cys-97, and Cys-91–Cys-102. Positions 43, 45, and 47 each coordinate Ca(2+). His-63 is a catalytic residue. Asp-64 is a Ca(2+) binding site. Asp-105 is a catalytic residue.

This sequence belongs to the phospholipase A2 family. Group II subfamily. D49 sub-subfamily. Ca(2+) is required as a cofactor. In terms of tissue distribution, expressed by the venom gland.

It is found in the secreted. The catalysed reaction is a 1,2-diacyl-sn-glycero-3-phosphocholine + H2O = a 1-acyl-sn-glycero-3-phosphocholine + a fatty acid + H(+). Functionally, snake venom phospholipase A2 (PLA2) that shows potent hemolytic activity, and exhibits medium anticoagulant effects by binding to factor Xa (F10) and inhibiting the prothrombinase activity (IC(50) is 90 nM). It is one of the few phospholipases A2 capable of hydrolyzing the phospholipids of E.coli membranes in the presence of a bactericidal/permeability-increasing protein (BPI) of neutrophils. PLA2 catalyzes the calcium-dependent hydrolysis of the 2-acyl groups in 3-sn-phosphoglycerides. The protein is Basic phospholipase A2 B of Gloydius halys (Chinese water mocassin).